Here is a 109-residue protein sequence, read N- to C-terminus: Large ribosomal subunit protein uL24 (109 aa).

It belongs to the universal ribosomal protein uL24 family. As to quaternary structure, part of the 50S ribosomal subunit.

Functionally, one of two assembly initiator proteins, it binds directly to the 5'-end of the 23S rRNA, where it nucleates assembly of the 50S subunit. One of the proteins that surrounds the polypeptide exit tunnel on the outside of the subunit. In Rickettsia akari (strain Hartford), this protein is Large ribosomal subunit protein uL24.